The primary structure comprises 282 residues: DNA-binding transcriptional repressor YiaJ (282 aa).

The span at 1-20 (MGKEVMGKKENEMAQEKERP) shows a compositional bias: basic and acidic residues. Residues 1-21 (MGKEVMGKKENEMAQEKERPA) are disordered. Residues 23–85 (SQSLFRGLML…PAAGSYRLTT (63 aa)) form the HTH iclR-type domain. The H-T-H motif DNA-binding region spans 45–64 (LAHLSELAGLNKSTVHRLLQ). In terms of domain architecture, IclR-ED spans 100–272 (IIHIAAPHLE…AQAISNELGF (173 aa)).

In terms of biological role, negatively controls the transcription of the yiaKLMNOPQRS operon, which may be involved in the utilization of 2,3-diketo-L-gulonate. This Escherichia coli (strain K12) protein is DNA-binding transcriptional repressor YiaJ (yiaJ).